Reading from the N-terminus, the 389-residue chain is Sulfate adenylyltransferase (389 aa).

Belongs to the sulfate adenylyltransferase family.

It catalyses the reaction sulfate + ATP + H(+) = adenosine 5'-phosphosulfate + diphosphate. Its pathway is sulfur metabolism; hydrogen sulfide biosynthesis; sulfite from sulfate: step 1/3. The polypeptide is Sulfate adenylyltransferase (Deinococcus deserti (strain DSM 17065 / CIP 109153 / LMG 22923 / VCD115)).